The sequence spans 217 residues: Adenylate kinase (217 aa).

10–15 (GAGKGT) serves as a coordination point for ATP. Residues 30-59 (STGDMFRAAMKEGTPLGLQAKEYIDRGDLV) are NMP. AMP contacts are provided by residues Thr-31, Arg-36, 57-59 (DLV), 85-88 (GFPR), and Gln-92. The interval 126–163 (GRRICRNCGATYHLVFHPPAQPGVCDKCGGELYQRPDD) is LID. Residue Arg-127 participates in ATP binding. Zn(2+) is bound by residues Cys-130 and Cys-133. ATP is bound at residue 136–137 (TY). Positions 150 and 153 each coordinate Zn(2+). 2 residues coordinate AMP: Arg-160 and Arg-171. Position 199 (Gln-199) interacts with ATP.

It belongs to the adenylate kinase family. As to quaternary structure, monomer.

The protein resides in the cytoplasm. It carries out the reaction AMP + ATP = 2 ADP. The protein operates within purine metabolism; AMP biosynthesis via salvage pathway; AMP from ADP: step 1/1. Catalyzes the reversible transfer of the terminal phosphate group between ATP and AMP. Plays an important role in cellular energy homeostasis and in adenine nucleotide metabolism. In Geobacillus thermodenitrificans (strain NG80-2), this protein is Adenylate kinase.